A 609-amino-acid polypeptide reads, in one-letter code: Pair-rule protein odd-paired (609 aa).

The disordered stretch occupies residues 20 to 41; it reads RMSPNTTASNSNAQQQQQQQLE. Residues 22-32 show a composition bias toward polar residues; sequence SPNTTASNSNA. The C2H2-type 1; atypical zinc-finger motif lies at 210-249; that stretch reads MQCLWIDPDQPGLVPPGGRKTCNKVFHSMHEIVTHLTVEH. 4 consecutive C2H2-type zinc fingers follow at residues 258–285, 291–315, 321–345, and 351–375; these read HACF…IRVH, FACP…KRTH, FKCE…SHVH, and YNCR…MKVH. Disordered stretches follow at residues 373-550 and 583-609; these read KVHG…ASAS and EAMN…ATAY. The span at 399–409 shows a compositional bias: polar residues; sequence IITGGAQTPPS. Composition is skewed to low complexity over residues 414-434 and 449-498; these read GSAG…IKSS and HLGA…LTAH. A compositionally biased stretch (basic residues) spans 528–537; it reads SHHHHPHHHQ. Positions 538–550 are enriched in low complexity; it reads AAPSPGAAAASAS. Positions 591–601 are enriched in basic residues; that stretch reads FGHHHHHHHLM.

This sequence belongs to the GLI C2H2-type zinc-finger protein family. Expressed throughout all segment primordia; expressed ubiquitously in the ectoderm and mesoderm precursors.

The protein localises to the nucleus. Transcription factor essential for parasegmental subdivision of the embryo. It is involved in the activation of wingless (wg) in odd parasegments. It is also required for the timely activation of wg in the remaining parasegments and for the timely activation of engrailed (en) in all parasegments. The protein is Pair-rule protein odd-paired (opa) of Drosophila melanogaster (Fruit fly).